The primary structure comprises 513 residues: ATP synthase subunit alpha (513 aa).

G169–T176 lines the ATP pocket.

It belongs to the ATPase alpha/beta chains family. As to quaternary structure, F-type ATPases have 2 components, CF(1) - the catalytic core - and CF(0) - the membrane proton channel. CF(1) has five subunits: alpha(3), beta(3), gamma(1), delta(1), epsilon(1). CF(0) has three main subunits: a(1), b(2) and c(9-12). The alpha and beta chains form an alternating ring which encloses part of the gamma chain. CF(1) is attached to CF(0) by a central stalk formed by the gamma and epsilon chains, while a peripheral stalk is formed by the delta and b chains.

It is found in the cell inner membrane. The enzyme catalyses ATP + H2O + 4 H(+)(in) = ADP + phosphate + 5 H(+)(out). Produces ATP from ADP in the presence of a proton gradient across the membrane. The alpha chain is a regulatory subunit. This is ATP synthase subunit alpha from Aeromonas salmonicida (strain A449).